We begin with the raw amino-acid sequence, 357 residues long: tRNA N6-adenosine threonylcarbamoyltransferase (357 aa).

His-113 and His-117 together coordinate Fe cation. Residues 136–140 (LVSGG), Asp-169, Gly-182, and Asn-288 contribute to the substrate site. Asp-316 is a Fe cation binding site.

The protein belongs to the KAE1 / TsaD family. Requires Fe(2+) as cofactor.

It localises to the cytoplasm. It catalyses the reaction L-threonylcarbamoyladenylate + adenosine(37) in tRNA = N(6)-L-threonylcarbamoyladenosine(37) in tRNA + AMP + H(+). Its function is as follows. Required for the formation of a threonylcarbamoyl group on adenosine at position 37 (t(6)A37) in tRNAs that read codons beginning with adenine. Is involved in the transfer of the threonylcarbamoyl moiety of threonylcarbamoyl-AMP (TC-AMP) to the N6 group of A37, together with TsaE and TsaB. TsaD likely plays a direct catalytic role in this reaction. The protein is tRNA N6-adenosine threonylcarbamoyltransferase of Gemmatimonas aurantiaca (strain DSM 14586 / JCM 11422 / NBRC 100505 / T-27).